The sequence spans 887 residues: Transportin-2 (887 aa).

20 HEAT repeats span residues 9–36 (GLQQ…DKLK), 41–79 (FPDF…AHYQ), 88–121 (FIKQ…KGEL), 127–164 (LLPQ…LDSD), 171–201 (NIMI…QFIM), 214–241 (FIEH…VMLL), 253–280 (HSII…FWLT), 296–386 (VQLI…LANV), 394–422 (HLLP…GAIA), 434–461 (PELI…TLSR), 475–508 (LKPL…EEEA), 516–549 (LSYI…ADSV), 557–595 (EYIQ…TALQ), 603–654 (EPVY…GLGG), 665–696 (IMTL…KACF), 704–737 (AEFM…MQMG), 745–780 (QMVL…YVCP), 788–821 (QQFI…IGVN), 830–861 (IFFC…KDQV), and 864–884 (ENWQ…LAAF). Residues 31 to 99 (VQDKLKQLNQ…KQECLNNIGD (69 aa)) enclose the Importin N-terminal domain. Positions 344–363 (TLTHEAERPDSSEDAEDDDD) are disordered. An N6-acetyllysine modification is found at lysine 852.

It belongs to the importin beta family. Importin beta-2 subfamily.

It localises to the cytoplasm. The protein localises to the nucleus. Functionally, probably functions in nuclear protein import as nuclear transport receptor. Serves as receptor for nuclear localization signals (NLS) in cargo substrates. Is thought to mediate docking of the importin/substrate complex to the nuclear pore complex (NPC) through binding to nucleoporin and the complex is subsequently translocated through the pore by an energy requiring, Ran-dependent mechanism. At the nucleoplasmic side of the NPC, Ran binds to the importin, the importin/substrate complex dissociates and importin is re-exported from the nucleus to the cytoplasm where GTP hydrolysis releases Ran. The directionality of nuclear import is thought to be conferred by an asymmetric distribution of the GTP- and GDP-bound forms of Ran between the cytoplasm and nucleus. This chain is Transportin-2 (Tnpo2), found in Mus musculus (Mouse).